A 171-amino-acid polypeptide reads, in one-letter code: Large ribosomal subunit protein bL17 (171 aa).

Residues 140–152 are compositionally biased toward basic and acidic residues; sequence KREIQTKAREEKR. Residues 140-171 form a disordered region; the sequence is KREIQTKAREEKRATRKSNSAPVNKETTSKKK. The segment covering 156 to 165 has biased composition (polar residues); the sequence is KSNSAPVNKE.

It belongs to the bacterial ribosomal protein bL17 family. Part of the 50S ribosomal subunit. Contacts protein L32.

This chain is Large ribosomal subunit protein bL17, found in Leptospira interrogans serogroup Icterohaemorrhagiae serovar Lai (strain 56601).